We begin with the raw amino-acid sequence, 256 residues long: MEAAADSPAETRSRVEKDSRRVEKDSRRPKKDSPAKTQSPAQDTSIMLRNNADTGKVLALPEHKKKRKGYLPAESVKILRRWMYKHRFRAYPSEAEKRMLSKKTNLSLSQISNWFINARRRILPDMLQRRGNDRIVGHKTGKDANATHLQSTDASVPAKSGPRGSDNVQSLPLRSSPKGQMSGEKIPEPGSAPSQKLTMIAQPKKKVKVSNITSSSSPEPVSTEEYADFSSFQLLVDAAVQRAAELELEKKQESNP.

The segment at 1-45 (MEAAADSPAETRSRVEKDSRRVEKDSRRPKKDSPAKTQSPAQDTS) is disordered. Positions 9 to 34 (AETRSRVEKDSRRVEKDSRRPKKDSP) are enriched in basic and acidic residues. The segment covering 35-45 (AKTQSPAQDTS) has biased composition (polar residues). Residues 62 to 125 (EHKKKRKGYL…INARRRILPD (64 aa)) constitute a DNA-binding region (homeobox; TALE-type). The tract at residues 136–224 (VGHKTGKDAN…SSSPEPVSTE (89 aa)) is disordered. Polar residues predominate over residues 166–179 (DNVQSLPLRSSPKG). The span at 209 to 224 (VSNITSSSSPEPVSTE) shows a compositional bias: low complexity.

It belongs to the TALE/TGIF homeobox family.

The protein resides in the nucleus. May have a transcription role in testis. In Papio hamadryas (Hamadryas baboon), this protein is Homeobox protein TGIF2LX (TGIF2LX).